Here is a 422-residue protein sequence, read N- to C-terminus: Probable D-serine dehydratase (422 aa).

K105 carries the N6-(pyridoxal phosphate)lysine modification.

Belongs to the serine/threonine dehydratase family. DsdA subfamily. The cofactor is pyridoxal 5'-phosphate.

The catalysed reaction is D-serine = pyruvate + NH4(+). The protein is Probable D-serine dehydratase of Carboxydothermus hydrogenoformans (strain ATCC BAA-161 / DSM 6008 / Z-2901).